We begin with the raw amino-acid sequence, 525 residues long: GMP synthase [glutamine-hydrolyzing] (525 aa).

The region spanning 11–200 is the Glutamine amidotransferase type-1 domain; that stretch reads PVLVVDFGAQ…LTEIAGLEQN (190 aa). The Nucleophile role is filled by cysteine 88. Catalysis depends on residues histidine 174 and glutamate 176. Residues 201 to 399 form the GMPS ATP-PPase domain; that stretch reads WTAANIAEEL…LGLPEEIVNR (199 aa). 229–235 is an ATP binding site; sequence SGGVDSA.

As to quaternary structure, homodimer.

It catalyses the reaction XMP + L-glutamine + ATP + H2O = GMP + L-glutamate + AMP + diphosphate + 2 H(+). It functions in the pathway purine metabolism; GMP biosynthesis; GMP from XMP (L-Gln route): step 1/1. Its function is as follows. Catalyzes the synthesis of GMP from XMP. The protein is GMP synthase [glutamine-hydrolyzing] of Corynebacterium diphtheriae (strain ATCC 700971 / NCTC 13129 / Biotype gravis).